A 160-amino-acid polypeptide reads, in one-letter code: Nucleotide-binding protein Noc_2254 (160 aa).

This sequence belongs to the YajQ family.

Functionally, nucleotide-binding protein. This Nitrosococcus oceani (strain ATCC 19707 / BCRC 17464 / JCM 30415 / NCIMB 11848 / C-107) protein is Nucleotide-binding protein Noc_2254.